The following is a 170-amino-acid chain: Crossover junction endodeoxyribonuclease RuvC (170 aa).

Catalysis depends on residues aspartate 11, glutamate 71, and aspartate 143. Mg(2+) contacts are provided by aspartate 11, glutamate 71, and aspartate 143.

This sequence belongs to the RuvC family. Homodimer which binds Holliday junction (HJ) DNA. The HJ becomes 2-fold symmetrical on binding to RuvC with unstacked arms; it has a different conformation from HJ DNA in complex with RuvA. In the full resolvosome a probable DNA-RuvA(4)-RuvB(12)-RuvC(2) complex forms which resolves the HJ. Mg(2+) is required as a cofactor.

It is found in the cytoplasm. The enzyme catalyses Endonucleolytic cleavage at a junction such as a reciprocal single-stranded crossover between two homologous DNA duplexes (Holliday junction).. Functionally, the RuvA-RuvB-RuvC complex processes Holliday junction (HJ) DNA during genetic recombination and DNA repair. Endonuclease that resolves HJ intermediates. Cleaves cruciform DNA by making single-stranded nicks across the HJ at symmetrical positions within the homologous arms, yielding a 5'-phosphate and a 3'-hydroxyl group; requires a central core of homology in the junction. The consensus cleavage sequence is 5'-(A/T)TT(C/G)-3'. Cleavage occurs on the 3'-side of the TT dinucleotide at the point of strand exchange. HJ branch migration catalyzed by RuvA-RuvB allows RuvC to scan DNA until it finds its consensus sequence, where it cleaves and resolves the cruciform DNA. The polypeptide is Crossover junction endodeoxyribonuclease RuvC (Sinorhizobium fredii (strain NBRC 101917 / NGR234)).